The following is a 232-amino-acid chain: MIEGLQEMLKRDFNITFKDVDLLDAAFTHASYVNETPERKKKLKYYERIEFLGDAVMQLCVSEYIYEHYPEMPEGKMSRLRAAMVRADSFSKFAIECHFNEYIRLGKGEEKGNARQRPSLLCDIFESFIGALYLDQGKDEVVRFISKVIFPKLELGWFDHMMDNKTELQEVLQQNGECKIKYNEVNVTGPDNERVYTMNVVVNNEVMGEGTGRTKKAAEQMAAYQALKKLRK.

Positions Gln-6–Gly-137 constitute an RNase III domain. Glu-50 is a Mg(2+) binding site. Asp-54 is a catalytic residue. Asp-123 and Glu-126 together coordinate Mg(2+). Glu-126 is an active-site residue. Positions Asp-163–Lys-232 constitute a DRBM domain.

The protein belongs to the ribonuclease III family. Homodimer. It depends on Mg(2+) as a cofactor.

It localises to the cytoplasm. The catalysed reaction is Endonucleolytic cleavage to 5'-phosphomonoester.. Functionally, digests double-stranded RNA. Involved in the processing of primary rRNA transcript to yield the immediate precursors to the large and small rRNAs (23S and 16S). Processes some mRNAs, and tRNAs when they are encoded in the rRNA operon. Processes pre-crRNA and tracrRNA of type II CRISPR loci if present in the organism. This is Ribonuclease 3 from Ligilactobacillus salivarius (strain UCC118) (Lactobacillus salivarius).